A 92-amino-acid polypeptide reads, in one-letter code: Small ribosomal subunit protein uS19c (92 aa).

This sequence belongs to the universal ribosomal protein uS19 family.

It localises to the plastid. The protein localises to the chloroplast. In terms of biological role, protein S19 forms a complex with S13 that binds strongly to the 16S ribosomal RNA. The protein is Small ribosomal subunit protein uS19c (rps19) of Pinus thunbergii (Japanese black pine).